The chain runs to 170 residues: Arginine repressor (170 aa).

It belongs to the ArgR family.

The protein localises to the cytoplasm. It participates in amino-acid biosynthesis; L-arginine biosynthesis [regulation]. Functionally, regulates arginine biosynthesis genes. This chain is Arginine repressor, found in Bifidobacterium longum (strain DJO10A).